Consider the following 140-residue polypeptide: Tail assembly protein G (140 aa).

The tract at residues 114 to 140 is disordered; the sequence is IDEPTSSGEERNEPAEPVTAEKPSPVS.

The protein belongs to the lambda-like tail assembly protein family. Interacts with the tail assembly protein GT and the tape measure protein.

It is found in the host cytoplasm. Its function is as follows. Promotes tail assembly by creating a scaffold for the tail tube proteins. Tail assembly proteins G and GT probably wrap the linear tape measure protein to create a tail assembly scaffold. This allows the polymerization of the tail tube protein, during which G and GT are released, therefore they are absent in the mature virion. The tail assembly protein GT is produced by a rare -1 ribosomal frameshift. The ratio of translated G/GT is about 20, and this ratio is important for proper tail assembly. This chain is Tail assembly protein G, found in Escherichia coli (Bacteriophage N15).